Reading from the N-terminus, the 924-residue chain is Isoleucine--tRNA ligase (924 aa).

The 'HIGH' region signature appears at 57 to 67; it reads PYANGDIHMGH. Glu552 lines the L-isoleucyl-5'-AMP pocket. The short motif at 593 to 597 is the 'KMSKS' region element; the sequence is KMSKS. Residue Lys596 coordinates ATP. Zn(2+)-binding residues include Cys891, Cys894, Cys911, and Cys914.

The protein belongs to the class-I aminoacyl-tRNA synthetase family. IleS type 1 subfamily. In terms of assembly, monomer. Zn(2+) serves as cofactor.

It is found in the cytoplasm. The catalysed reaction is tRNA(Ile) + L-isoleucine + ATP = L-isoleucyl-tRNA(Ile) + AMP + diphosphate. Catalyzes the attachment of isoleucine to tRNA(Ile). As IleRS can inadvertently accommodate and process structurally similar amino acids such as valine, to avoid such errors it has two additional distinct tRNA(Ile)-dependent editing activities. One activity is designated as 'pretransfer' editing and involves the hydrolysis of activated Val-AMP. The other activity is designated 'posttransfer' editing and involves deacylation of mischarged Val-tRNA(Ile). The protein is Isoleucine--tRNA ligase of Geobacillus thermodenitrificans (strain NG80-2).